A 159-amino-acid polypeptide reads, in one-letter code: Mediator of RNA polymerase II transcription subunit 10 (159 aa).

The segment at 54–77 (STHTKPQPPSQDDEQKGSANDPLL) is disordered.

Belongs to the Mediator complex subunit 10 family. Component of the Mediator complex.

Its subcellular location is the nucleus. Functionally, component of the Mediator complex, a coactivator involved in the regulated transcription of nearly all RNA polymerase II-dependent genes. Mediator functions as a bridge to convey information from gene-specific regulatory proteins to the basal RNA polymerase II transcription machinery. Mediator is recruited to promoters by direct interactions with regulatory proteins and serves as a scaffold for the assembly of a functional preinitiation complex with RNA polymerase II and the general transcription factors. This Aspergillus fumigatus (strain ATCC MYA-4609 / CBS 101355 / FGSC A1100 / Af293) (Neosartorya fumigata) protein is Mediator of RNA polymerase II transcription subunit 10 (nut2).